A 212-amino-acid polypeptide reads, in one-letter code: Probable nicotinate-nucleotide adenylyltransferase (212 aa).

It belongs to the NadD family.

The catalysed reaction is nicotinate beta-D-ribonucleotide + ATP + H(+) = deamido-NAD(+) + diphosphate. It participates in cofactor biosynthesis; NAD(+) biosynthesis; deamido-NAD(+) from nicotinate D-ribonucleotide: step 1/1. In terms of biological role, catalyzes the reversible adenylation of nicotinate mononucleotide (NaMN) to nicotinic acid adenine dinucleotide (NaAD). The polypeptide is Probable nicotinate-nucleotide adenylyltransferase (Mycobacterium avium (strain 104)).